A 200-amino-acid polypeptide reads, in one-letter code: Phospholipase A2 inhibitor gamma subunit B (200 aa).

Positions 1–19 are cleaved as a signal peptide; that stretch reads MKFLLFCCLFGTFLATGMC. Intrachain disulfides connect cysteine 22–cysteine 46, cysteine 25–cysteine 32, cysteine 39–cysteine 67, cysteine 73–cysteine 94, cysteine 95–cysteine 100, cysteine 120–cysteine 145, cysteine 138–cysteine 165, and cysteine 171–cysteine 191.

This sequence belongs to the CNF-like-inhibitor family. In terms of assembly, heteromer composed of subunit A and subunit B.

The protein resides in the secreted. In terms of biological role, inhibits the enzymatic activity of the phospholipase A2 (PLA2). This chain is Phospholipase A2 inhibitor gamma subunit B, found in Elaphe climacophora (Japanese rat snake).